The primary structure comprises 217 residues: Cytochrome c biogenesis ATP-binding export protein CcmA (217 aa).

Residues 6–216 (LQLEQLACQR…QYKFFDQGNM (211 aa)) form the ABC transporter domain. 38–45 (GHNGIGKT) contacts ATP.

This sequence belongs to the ABC transporter superfamily. CcmA exporter (TC 3.A.1.107) family. The complex is composed of two ATP-binding proteins (CcmA) and two transmembrane proteins (CcmB).

The protein localises to the cell inner membrane. The catalysed reaction is heme b(in) + ATP + H2O = heme b(out) + ADP + phosphate + H(+). In terms of biological role, part of the ABC transporter complex CcmAB involved in the biogenesis of c-type cytochromes; once thought to export heme, this seems not to be the case, but its exact role is uncertain. Responsible for energy coupling to the transport system. This chain is Cytochrome c biogenesis ATP-binding export protein CcmA, found in Histophilus somni (strain 129Pt) (Haemophilus somnus).